Here is a 168-residue protein sequence, read N- to C-terminus: UPF0478 protein SH1183 (168 aa).

The chain crosses the membrane as a helical span at residues 7-27 (IAGIIAAIAFLVLCIGIVVVL). The interval 144–168 (YRNTSVGNDANHSNENYTTNVEKNF) is disordered.

Belongs to the UPF0478 family.

The protein localises to the cell membrane. The protein is UPF0478 protein SH1183 of Staphylococcus haemolyticus (strain JCSC1435).